Consider the following 549-residue polypeptide: Oxygen-dependent choline dehydrogenase (549 aa).

4–33 contacts FAD; that stretch reads DFVIIGSGSAGSAMAYRLSENGRYSVIVIE. The active-site Proton acceptor is histidine 465.

This sequence belongs to the GMC oxidoreductase family. It depends on FAD as a cofactor.

It catalyses the reaction choline + A = betaine aldehyde + AH2. The enzyme catalyses betaine aldehyde + NAD(+) + H2O = glycine betaine + NADH + 2 H(+). It participates in amine and polyamine biosynthesis; betaine biosynthesis via choline pathway; betaine aldehyde from choline (cytochrome c reductase route): step 1/1. In terms of biological role, involved in the biosynthesis of the osmoprotectant glycine betaine. Catalyzes the oxidation of choline to betaine aldehyde and betaine aldehyde to glycine betaine at the same rate. The protein is Oxygen-dependent choline dehydrogenase of Brucella suis biovar 1 (strain 1330).